Here is a 177-residue protein sequence, read N- to C-terminus: ATP synthase subunit delta (177 aa).

The protein belongs to the ATPase delta chain family. As to quaternary structure, F-type ATPases have 2 components, F(1) - the catalytic core - and F(0) - the membrane proton channel. F(1) has five subunits: alpha(3), beta(3), gamma(1), delta(1), epsilon(1). F(0) has three main subunits: a(1), b(2) and c(10-14). The alpha and beta chains form an alternating ring which encloses part of the gamma chain. F(1) is attached to F(0) by a central stalk formed by the gamma and epsilon chains, while a peripheral stalk is formed by the delta and b chains.

It is found in the cell inner membrane. Functionally, f(1)F(0) ATP synthase produces ATP from ADP in the presence of a proton or sodium gradient. F-type ATPases consist of two structural domains, F(1) containing the extramembraneous catalytic core and F(0) containing the membrane proton channel, linked together by a central stalk and a peripheral stalk. During catalysis, ATP synthesis in the catalytic domain of F(1) is coupled via a rotary mechanism of the central stalk subunits to proton translocation. In terms of biological role, this protein is part of the stalk that links CF(0) to CF(1). It either transmits conformational changes from CF(0) to CF(1) or is implicated in proton conduction. The chain is ATP synthase subunit delta from Neisseria meningitidis serogroup C (strain 053442).